A 390-amino-acid chain; its full sequence is Endoglucanase gh5-1 (390 aa).

The N-terminal stretch at 1 to 16 is a signal peptide; that stretch reads MKATILASTFAAGALA. In terms of domain architecture, CBM1 spans 17–52; sequence QSGAWGQCGGNGWSGATSCISGYACNYVNDWYSQCQ. N-linked (GlcNAc...) asparagine glycosylation is found at Asn-157 and Asn-261.

It belongs to the glycosyl hydrolase 5 (cellulase A) family. N-glycosylated.

It localises to the secreted. The catalysed reaction is Endohydrolysis of (1-&gt;4)-beta-D-glucosidic linkages in cellulose, lichenin and cereal beta-D-glucans.. Its function is as follows. Endoglucanase that plays an important role in biomass degradation. Binds onto plant cell walls to participate in the hydrolysis of cellulose. The chain is Endoglucanase gh5-1 from Neurospora crassa (strain ATCC 24698 / 74-OR23-1A / CBS 708.71 / DSM 1257 / FGSC 987).